Reading from the N-terminus, the 104-residue chain is Co-chaperonin GroES 5 (104 aa).

Belongs to the GroES chaperonin family. Heptamer of 7 subunits arranged in a ring. Interacts with the chaperonin GroEL.

It localises to the cytoplasm. In terms of biological role, together with the chaperonin GroEL, plays an essential role in assisting protein folding. The GroEL-GroES system forms a nano-cage that allows encapsulation of the non-native substrate proteins and provides a physical environment optimized to promote and accelerate protein folding. GroES binds to the apical surface of the GroEL ring, thereby capping the opening of the GroEL channel. The protein is Co-chaperonin GroES 5 of Rhizobium meliloti (strain 1021) (Ensifer meliloti).